The chain runs to 192 residues: A-type ATP synthase subunit E (192 aa).

Belongs to the V-ATPase E subunit family. In terms of assembly, has multiple subunits with at least A(3), B(3), C, D, E, F, H, I and proteolipid K(x).

It is found in the cell membrane. Component of the A-type ATP synthase that produces ATP from ADP in the presence of a proton gradient across the membrane. The sequence is that of A-type ATP synthase subunit E from Methanocorpusculum labreanum (strain ATCC 43576 / DSM 4855 / Z).